The primary structure comprises 214 residues: Rho-related GTP-binding protein RhoJ (214 aa).

Residues cysteine 3 and cysteine 11 are each lipidated (S-palmitoyl cysteine). GTP contacts are provided by residues 31–36 (AVGKTC), 46–53 (FPEEYVPT), 75–79 (DTAGQ), 133–136 (TQID), and 177–178 (AL). The Effector region signature appears at 50–58 (YVPTVFDHY). Cysteine 211 is subject to Cysteine methyl ester. Cysteine 211 carries the S-farnesyl cysteine lipid modification. Residues 212-214 (AII) constitute a propeptide, removed in mature form.

Belongs to the small GTPase superfamily. Rho family. As to quaternary structure, interacts with the CRIB domains of proteins such as Pak1 and Was/Wasp. Interacts with GLUL. Palmitoylated; regulates localization to the plasma membrane and may be mediated by GLUL. Highly expressed in heart with moderate levels in lung and liver. Very low levels detected in brain, spleen, skeletal muscle, kidney and testis.

It localises to the cell membrane. Its function is as follows. Plasma membrane-associated small GTPase specifically involved in angiogenesis. Required for endothelial cell migration during vascular development via its interaction with GLUL. Elicits the formation of F-actin-rich structures, thereby regulating endothelial cell migration. This Mus musculus (Mouse) protein is Rho-related GTP-binding protein RhoJ (Rhoj).